The following is a 45-amino-acid chain: GLSAAERQVVASCWKDIAGADXGAGVGKEXLIKFISAAPEMAAVF.

Positions 1-45 constitute a Globin domain; sequence GLSAAERQVVASCWKDIAGADXGAGVGKEXLIKFISAAPEMAAVF.

This sequence belongs to the globin family. In terms of assembly, monomer.

The chain is Globin, minor monomeric component from Glycera dibranchiata (Bloodworm).